We begin with the raw amino-acid sequence, 407 residues long: Serine/threonine transporter SstT (407 aa).

Helical transmembrane passes span 11–31 (IIHG…VILA), 43–63 (FLGD…VFVL), 82–102 (IISL…LLSF), 141–161 (ALMT…GIAL), 192–212 (LGIF…ALAG), 216–236 (LLMV…PLIV), 298–318 (MGGA…TLGV), 339–359 (ASGV…LFGI), and 363–383 (IAMQ…SAET).

Belongs to the dicarboxylate/amino acid:cation symporter (DAACS) (TC 2.A.23) family.

The protein resides in the cell inner membrane. The enzyme catalyses L-serine(in) + Na(+)(in) = L-serine(out) + Na(+)(out). It catalyses the reaction L-threonine(in) + Na(+)(in) = L-threonine(out) + Na(+)(out). In terms of biological role, involved in the import of serine and threonine into the cell, with the concomitant import of sodium (symport system). In Shewanella denitrificans (strain OS217 / ATCC BAA-1090 / DSM 15013), this protein is Serine/threonine transporter SstT.